Here is a 354-residue protein sequence, read N- to C-terminus: Probable butyrate kinase (354 aa).

Belongs to the acetokinase family.

It is found in the cytoplasm. It catalyses the reaction butanoate + ATP = butanoyl phosphate + ADP. This chain is Probable butyrate kinase, found in Phocaeicola vulgatus (strain ATCC 8482 / DSM 1447 / JCM 5826 / CCUG 4940 / NBRC 14291 / NCTC 11154) (Bacteroides vulgatus).